The following is a 243-amino-acid chain: Sec-independent protein translocase protein TATB, chloroplastic (243 aa).

The N-terminal 67 residues, 1–67 (MTPTANLLLP…SRTRRRNVIC (67 aa)), are a transit peptide targeting the chloroplast. Over 68-69 (AS) the chain is Lumenal. The helical transmembrane segment at 70 to 90 (LFGVGAPEALVIGVVALLVFG) threads the bilayer. At 91–243 (PKGLAEVARN…NKSQKAEGER (153 aa)) the chain is on the stromal side. Disordered regions lie at residues 129-165 (EIGI…PAPY) and 178-243 (IAAS…EGER). 2 stretches are compositionally biased toward polar residues: residues 135-152 (VSQS…NQQP) and 187-204 (NPQQ…PTTP).

The protein belongs to the TatB family. In terms of assembly, in thylakoid membranes, TATC and TATB form a large receptor complex, containing about eight TATC-TATB pairs, which binds the precursor protein. Twin arginine signal peptide promotes pH-triggered docking of TATA oligomers to TATC-TATB receptor complex, inducing a conformational switch of TATA that results in activation of the translocase. TATA dissociates from TATC-TATB upon completion of translocation.

The protein localises to the plastid. Its subcellular location is the chloroplast thylakoid membrane. Functionally, part of the twin-arginine translocation (Tat) system that transports large folded proteins containing a characteristic twin-arginine motif in their signal peptide across the thylakoid membrane. Involved in delta pH-dependent protein transport required for chloroplast development, especially thylakoid membrane formation. TATC and TATB mediate precursor recognition, whereas TATA facilitates translocation. The chain is Sec-independent protein translocase protein TATB, chloroplastic from Zea mays (Maize).